A 157-amino-acid polypeptide reads, in one-letter code: Endoribonuclease YbeY (157 aa).

Zn(2+) contacts are provided by His116, His120, and His126.

Belongs to the endoribonuclease YbeY family. Zn(2+) is required as a cofactor.

The protein localises to the cytoplasm. Single strand-specific metallo-endoribonuclease involved in late-stage 70S ribosome quality control and in maturation of the 3' terminus of the 16S rRNA. The sequence is that of Endoribonuclease YbeY from Blochmanniella pennsylvanica (strain BPEN).